A 246-amino-acid chain; its full sequence is 3'(2'),5'-bisphosphate nucleotidase CysQ (246 aa).

E64, D83, L85, D86, and D205 together coordinate Mg(2+). Residue E64 coordinates substrate. Residues 85–88 (LDGT) and D205 each bind substrate.

This sequence belongs to the inositol monophosphatase superfamily. CysQ family. Requires Mg(2+) as cofactor.

The protein localises to the cell inner membrane. The enzyme catalyses adenosine 3',5'-bisphosphate + H2O = AMP + phosphate. Converts adenosine-3',5'-bisphosphate (PAP) to AMP. The protein is 3'(2'),5'-bisphosphate nucleotidase CysQ of Salmonella typhimurium (strain LT2 / SGSC1412 / ATCC 700720).